Consider the following 325-residue polypeptide: GMP reductase (325 aa).

C174 (thioimidate intermediate) is an active-site residue. An NADP(+)-binding site is contributed by 203–226 (IIADGGIRTHGDIAKSIRFGATMV).

The protein belongs to the IMPDH/GMPR family. GuaC type 2 subfamily.

The enzyme catalyses IMP + NH4(+) + NADP(+) = GMP + NADPH + 2 H(+). Catalyzes the irreversible NADPH-dependent deamination of GMP to IMP. It functions in the conversion of nucleobase, nucleoside and nucleotide derivatives of G to A nucleotides, and in maintaining the intracellular balance of A and G nucleotides. The sequence is that of GMP reductase from Helicobacter pylori (strain J99 / ATCC 700824) (Campylobacter pylori J99).